We begin with the raw amino-acid sequence, 402 residues long: Protein lag-2 (402 aa).

Positions 1–15 are cleaved as a signal peptide; sequence MIAYFLLLLTCLPVL. The Extracellular portion of the chain corresponds to 16–279; it reads QARVEVHQEF…TTTTPTTVEI (264 aa). N-linked (GlcNAc...) asparagine glycosylation is found at Asn-72 and Asn-105. The region spanning 122 to 166 is the DSL domain; that stretch reads VTCARNYFGNRCENFCDAHLAKAARKRCDAMGRLRCDIGWMGPHC. 9 cysteine pairs are disulfide-bonded: Cys-124-Cys-133, Cys-137-Cys-149, Cys-157-Cys-166, Cys-175-Cys-183, Cys-177-Cys-204, Cys-206-Cys-215, Cys-233-Cys-245, Cys-239-Cys-254, and Cys-256-Cys-265. 2 EGF-like domains span residues 171–216 and 229–266; these read DPRK…TRCE and RPDA…EFCE. Asn-194 carries an N-linked (GlcNAc...) asparagine glycan. Residues 280–306 form a helical membrane-spanning segment; it reads TVSTSGYSSAVYITVALFVIFSIIIGC. The Cytoplasmic segment spans residues 307 to 402; it reads FKYKFKPMRQ…PPSIPACHYV (96 aa).

May interact with lin-12 / Notch receptor. As to expression, expressed in the gonad distal tip cell (DTC) of hermaphrodites.

Its subcellular location is the cell membrane. In terms of biological role, probable ligand for lin-12/Notch and glp-1/Notch receptors and involved in the mediation of Notch signaling. Involved in the lin-12/Notch pathway signaling of cell fate in vulval precursor cells (VPCs) and in the postembryonic mesodermal lineage (M lineage), acting redundantly with dsl-1 and apx-1. Functions in uterine cells to promote basement membrane mobility during tissue remodeling. Required for oocyte growth control, acting redundantly with apx-1, perhaps signaling via the glp-1/Notch pathway. Plays a role in Notch-dependent induction of left-right asymmetry in interneurons and motoneurons. Involved in maintaining the developmentally arrested larval state known as dauer, probably signaling in the glp-1/Notch pathway. Required for normal sleep bout quantity and arousal thresholds during the transition from the last larval stage to adulthood in well-fed animals. The polypeptide is Protein lag-2 (Caenorhabditis elegans).